The primary structure comprises 230 residues: Interleukin-6 (230 aa).

A signal peptide spans 1 to 24 (MASKHNADLSSAAMLAALLLCALG). C96 and C106 are disulfide-bonded. The N-linked (GlcNAc...) asparagine glycan is linked to N100. The span at 206–218 (REMPKQKRRKDDG) shows a compositional bias: basic and acidic residues. Residues 206 to 230 (REMPKQKRRKDDGIIPPIHPSYQMT) form a disordered region.

This sequence belongs to the IL-6 superfamily. As to quaternary structure, component of a hexamer of two molecules each of IL6, IL6R and IL6ST; first binds to IL6R to associate with the signaling subunit IL6ST. In terms of tissue distribution, expressed in kidney and spleen. Low expression in liver and gills.

It localises to the secreted. Functionally, cytokine with a wide variety of biological functions in immunity, tissue regeneration, and metabolism. Binds to IL6R, then the complex associates to the signaling subunit IL6ST/gp130 to trigger the intracellular IL6-signaling pathway. The interaction with the membrane-bound IL6R and IL6ST stimulates 'classic signaling', whereas the binding of IL6 and soluble IL6R to IL6ST stimulates 'trans-signaling'. Alternatively, 'cluster signaling' occurs when membrane-bound IL6:IL6R complexes on transmitter cells activate IL6ST receptors on neighboring receiver cells. The chain is Interleukin-6 (il6) from Paralichthys olivaceus (Bastard halibut).